The sequence spans 559 residues: Potassium-transporting ATPase potassium-binding subunit (559 aa).

Transmembrane regions (helical) follow at residues 6–26, 63–83, 131–151, 173–193, 253–273, 283–303, 327–347, 356–376, 379–399, 416–436, 484–504, and 524–544; these read FLLIASFLLLLFLLARPLGNV, LLAILLLNVFGLFVLFAMLML, VGLTVQNFLSAASGIAVIFAL, ITLWVLLPISLVIALFFIQQG, FVQMLAIFLIPAALCFAFGDV, LLWAMSLIFVVCAALVMWAEW, FGILASSLYAVVTTAASCGAV, ALGGMIPLWLMQIGEVVFGGV, GLYGMLLFVLLAVFIAGLMIG, LTALAILVTPALVLMGTALAL, LLAFCMFVGRFGVIVPVMAIA, and GALFVGLLIGTVLLVGALTFI.

It belongs to the KdpA family. As to quaternary structure, the system is composed of three essential subunits: KdpA, KdpB and KdpC.

The protein resides in the cell inner membrane. Its function is as follows. Part of the high-affinity ATP-driven potassium transport (or Kdp) system, which catalyzes the hydrolysis of ATP coupled with the electrogenic transport of potassium into the cytoplasm. This subunit binds the periplasmic potassium ions and delivers the ions to the membrane domain of KdpB through an intramembrane tunnel. The polypeptide is Potassium-transporting ATPase potassium-binding subunit (Enterobacter sp. (strain 638)).